The sequence spans 716 residues: Putative proline--tRNA ligase C19C7.06 (716 aa).

Positions lysine 655–glycine 675 are disordered.

Belongs to the class-II aminoacyl-tRNA synthetase family.

It localises to the cytoplasm. The enzyme catalyses tRNA(Pro) + L-proline + ATP = L-prolyl-tRNA(Pro) + AMP + diphosphate. The polypeptide is Putative proline--tRNA ligase C19C7.06 (prs1) (Schizosaccharomyces pombe (strain 972 / ATCC 24843) (Fission yeast)).